The primary structure comprises 409 residues: Argininosuccinate synthase (409 aa).

ATP-binding positions include alanine 12–serine 20 and alanine 39. Residue tyrosine 91 participates in L-citrulline binding. Glycine 121 is a binding site for ATP. Threonine 123, asparagine 127, and aspartate 128 together coordinate L-aspartate. Residue asparagine 127 coordinates L-citrulline. Residues arginine 131, serine 180, serine 189, glutamate 265, and tyrosine 277 each contribute to the L-citrulline site.

Belongs to the argininosuccinate synthase family. Type 1 subfamily. As to quaternary structure, homotetramer.

It localises to the cytoplasm. It catalyses the reaction L-citrulline + L-aspartate + ATP = 2-(N(omega)-L-arginino)succinate + AMP + diphosphate + H(+). It functions in the pathway amino-acid biosynthesis; L-arginine biosynthesis; L-arginine from L-ornithine and carbamoyl phosphate: step 2/3. The protein is Argininosuccinate synthase of Buchnera aphidicola subsp. Baizongia pistaciae (strain Bp).